We begin with the raw amino-acid sequence, 393 residues long: Formate-dependent phosphoribosylglycinamide formyltransferase (393 aa).

Residues 22–23 and glutamate 82 contribute to the N(1)-(5-phospho-beta-D-ribosyl)glycinamide site; that span reads EL. ATP is bound by residues arginine 114, lysine 155, 160-165, 195-198, and glutamate 203; these read SSGHGQ and EGFI. The 190-residue stretch at 119 to 308 folds into the ATP-grasp domain; that stretch reads RLAAEELGLP…QFALHARAIL (190 aa). 2 residues coordinate Mg(2+): glutamate 267 and glutamate 279. N(1)-(5-phospho-beta-D-ribosyl)glycinamide contacts are provided by residues aspartate 286, lysine 356, and 363 to 364; that span reads RR.

It belongs to the PurK/PurT family. In terms of assembly, homodimer.

It carries out the reaction N(1)-(5-phospho-beta-D-ribosyl)glycinamide + formate + ATP = N(2)-formyl-N(1)-(5-phospho-beta-D-ribosyl)glycinamide + ADP + phosphate + H(+). It functions in the pathway purine metabolism; IMP biosynthesis via de novo pathway; N(2)-formyl-N(1)-(5-phospho-D-ribosyl)glycinamide from N(1)-(5-phospho-D-ribosyl)glycinamide (formate route): step 1/1. Its function is as follows. Involved in the de novo purine biosynthesis. Catalyzes the transfer of formate to 5-phospho-ribosyl-glycinamide (GAR), producing 5-phospho-ribosyl-N-formylglycinamide (FGAR). Formate is provided by PurU via hydrolysis of 10-formyl-tetrahydrofolate. This Haemophilus ducreyi (strain 35000HP / ATCC 700724) protein is Formate-dependent phosphoribosylglycinamide formyltransferase.